The sequence spans 299 residues: Coenzyme PQQ synthesis protein B (299 aa).

Belongs to the PqqB family.

It functions in the pathway cofactor biosynthesis; pyrroloquinoline quinone biosynthesis. May be involved in the transport of PQQ or its precursor to the periplasm. This chain is Coenzyme PQQ synthesis protein B, found in Xanthomonas oryzae pv. oryzae (strain MAFF 311018).